Here is a 323-residue protein sequence, read N- to C-terminus: Methenyltetrahydromethanopterin cyclohydrolase (323 aa).

The protein belongs to the MCH family.

It localises to the cytoplasm. The enzyme catalyses 5,10-methenyl-5,6,7,8-tetrahydromethanopterin + H2O = N(5)-formyl-5,6,7,8-tetrahydromethanopterin + H(+). It functions in the pathway one-carbon metabolism; methanogenesis from CO(2); 5,10-methenyl-5,6,7,8-tetrahydromethanopterin from CO(2): step 3/3. Its function is as follows. Catalyzes the reversible interconversion of 5-formyl-H(4)MPT to methenyl-H(4)MPT(+). The protein is Methenyltetrahydromethanopterin cyclohydrolase of Methanococcus maripaludis (strain C5 / ATCC BAA-1333).